The following is a 341-amino-acid chain: UPF0284 protein Ta0078 (341 aa).

This sequence belongs to the UPF0284 family.

In Thermoplasma acidophilum (strain ATCC 25905 / DSM 1728 / JCM 9062 / NBRC 15155 / AMRC-C165), this protein is UPF0284 protein Ta0078.